Consider the following 1541-residue polypeptide: WD repeat-containing protein 62 (1541 aa).

Residue Ala-2 is modified to N-acetylalanine. Phosphoserine is present on Ser-33. The residue at position 46 (Thr-46) is a Phosphothreonine. 12 WD repeats span residues 109-150 (TARK…QVAE), 153-194 (GHKY…VVAS), 196-234 (KVSC…EAKV), 291-330 (INLK…YLAN), 357-396 (AVYP…KVGK), 402-450 (FHSS…DSHW), 490-529 (DMKA…ELVR), 532-574 (AHDA…SLEQ), 578-618 (DHSS…DGLH), 626-665 (AEKT…QKKC), 671-713 (GDEG…KMFG), and 714-752 (HSEI…TNCM). A Phosphoserine modification is found at Ser-501. Disordered stretches follow at residues 762 to 820 (REQP…KESL) and 911 to 1050 (LSQS…LPQT). Basic and acidic residues predominate over residues 770 to 780 (KDGKWSRDPRQ). Over residues 781 to 795 (ETCTSMPSEISLSPG) the composition is skewed to polar residues. Over residues 797 to 809 (QTEDELEEECEPE) the composition is skewed to acidic residues. One copy of the WD 13 repeat lies at 803-846 (EEECEPEELLKTPSKESLDSDPRCLLTNGKLPLWAKRLLGDDDV). Over residues 810–820 (ELLKTPSKESL) the composition is skewed to basic and acidic residues. A compositionally biased stretch (low complexity) spans 937–948 (VSELLCSLESEV). Position 943 is a phosphoserine (Ser-943). Positions 1008-1026 (PPRPDPDPPFDVAVPPAPG) are enriched in pro residues. Phosphothreonine is present on Thr-1050. Ser-1095, Ser-1125, and Ser-1151 each carry phosphoserine. Disordered regions lie at residues 1133–1153 (LAGS…TSPG) and 1185–1212 (SSSS…QGVH). Residues 1138 to 1180 (PRAEPLRAGTGYTSPGRTNVLSAGKAEEPLEAWSPLTSCLTGL) form a WD 14 repeat. The span at 1193–1202 (DKTPPTPTAL) shows a compositional bias: pro residues. Phosphoserine occurs at positions 1235, 1255, and 1256. A disordered region spans residues 1273–1293 (TVTPSSDSEGQEPALPSRGNH). Position 1275 is a phosphothreonine (Thr-1275).

As to quaternary structure, can form homodimers (via C-terminus). Interacts (via C-terminus) with MAPKBP1 (via C-terminus). Interacts with CDK5RAP2, CEP152, CEP63 and KIAA0753. CEP63, CDK5RAP2, CEP152, WDR62 are proposed to form a stepwise assembled complex at the centrosome forming a ring near parental centrioles.

It localises to the nucleus. The protein localises to the cytoplasm. It is found in the cytoskeleton. The protein resides in the spindle pole. Its subcellular location is the microtubule organizing center. It localises to the centrosome. The protein localises to the centriole. Required for cerebral cortical development. Plays a role in neuronal proliferation and migration. Plays a role in mother-centriole-dependent centriole duplication; the function seems also to involve CEP152, CDK5RAP2 and CEP63 through a stepwise assembled complex at the centrosome that recruits CDK2 required for centriole duplication. The sequence is that of WD repeat-containing protein 62 (WDR62) from Sus scrofa (Pig).